Reading from the N-terminus, the 129-residue chain is Small ribosomal subunit protein uS11 (129 aa).

The protein belongs to the universal ribosomal protein uS11 family. Part of the 30S ribosomal subunit. Interacts with proteins S7 and S18. Binds to IF-3.

Functionally, located on the platform of the 30S subunit, it bridges several disparate RNA helices of the 16S rRNA. Forms part of the Shine-Dalgarno cleft in the 70S ribosome. This is Small ribosomal subunit protein uS11 from Desulfitobacterium hafniense (strain DSM 10664 / DCB-2).